The following is a 140-amino-acid chain: Large ribosomal subunit protein bL19 (140 aa).

A compositionally biased stretch (basic and acidic residues) spans 113-126 (RIAERQDRTADGKI). Residues 113-140 (RIAERQDRTADGKIKKGGKSAPAPTAAE) are disordered.

This sequence belongs to the bacterial ribosomal protein bL19 family.

This protein is located at the 30S-50S ribosomal subunit interface and may play a role in the structure and function of the aminoacyl-tRNA binding site. The protein is Large ribosomal subunit protein bL19 of Xanthobacter autotrophicus (strain ATCC BAA-1158 / Py2).